A 172-amino-acid chain; its full sequence is DNA-directed RNA polymerase II subunit rpb7 (172 aa).

It belongs to the eukaryotic RPB7/RPC8 RNA polymerase subunit family. In terms of assembly, component of the RNA polymerase II (Pol II) complex consisting of 12 subunits. RPB4 and RPB7 form a subcomplex that protrudes from the 10-subunit Pol II core complex.

It is found in the nucleus. In terms of biological role, DNA-dependent RNA polymerase catalyzes the transcription of DNA into RNA using the four ribonucleoside triphosphates as substrates. Component of RNA polymerase II which synthesizes mRNA precursors and many functional non-coding RNAs. Pol II is the central component of the basal RNA polymerase II transcription machinery. It is composed of mobile elements that move relative to each other. RPB7 is part of a subcomplex with RPB4 that binds to a pocket formed by RPB1, RPB2 and RPB6 at the base of the clamp element. The RPB4-RPB7 subcomplex seems to lock the clamp via RPB7 in the closed conformation thus preventing double-stranded DNA to enter the active site cleft. The RPB4-RPB7 subcomplex binds single-stranded DNA and RNA. This chain is DNA-directed RNA polymerase II subunit rpb7 (polr2g), found in Dictyostelium discoideum (Social amoeba).